Here is a 351-residue protein sequence, read N- to C-terminus: MEEEKILESDLRHISFVMPKYTPIEKIGEGSFSVVYKALDAESGRYVALKAITRTSSPARVLDEMMFLKTLGGRKNCMGLLGCFRNEDQVVAVFPYFEPIDFREFISNANLADIKRYLHNLLIAIEHVHSNGIMHRDLKPGNFLYNKESGRGMLIDFGLAQYEEYSEGQHAEGGAKPAGPLLFFNSVVSKTKPPGYYERDGRPPMKAPRAGTRGFRAPEVLFRCQRQTGAIDMWSVGVIFLTILTTQYPFFYSSDDIDSIVEIATIFGHAEMRKAAKFYGRVWRSNIDSIPEERIPFETIVESLNPWAEIGSDGYDLLYRMLDLCSSSRITASDALSHPFFDDLKTHENCA.

The 321-residue stretch at 21–341 (YTPIEKIGEG…ASDALSHPFF (321 aa)) folds into the Protein kinase domain. Residues 27–35 (IGEGSFSVV) and lysine 50 contribute to the ATP site. Residue aspartate 137 is the Proton acceptor of the active site.

The protein belongs to the protein kinase superfamily. Ser/Thr protein kinase family. CDC7 subfamily. Requires Mg(2+) as cofactor.

The enzyme catalyses L-seryl-[protein] + ATP = O-phospho-L-seryl-[protein] + ADP + H(+). The catalysed reaction is L-threonyl-[protein] + ATP = O-phospho-L-threonyl-[protein] + ADP + H(+). In terms of biological role, serine/threonine-protein kinase. Needed for the initiation of DNA synthesis during mitosis as well as for synaptonemal complex formation and commitment to recombination during meiosis. The polypeptide is Probable cell division control protein 7 homolog 1 (CDC7-1) (Encephalitozoon cuniculi (strain GB-M1) (Microsporidian parasite)).